The sequence spans 68 residues: Large ribosomal subunit protein bL35 (68 aa).

This sequence belongs to the bacterial ribosomal protein bL35 family.

This Persephonella marina (strain DSM 14350 / EX-H1) protein is Large ribosomal subunit protein bL35.